Here is a 249-residue protein sequence, read N- to C-terminus: Aspartate/glutamate leucyltransferase (249 aa).

This sequence belongs to the R-transferase family. Bpt subfamily.

Its subcellular location is the cytoplasm. The catalysed reaction is N-terminal L-glutamyl-[protein] + L-leucyl-tRNA(Leu) = N-terminal L-leucyl-L-glutamyl-[protein] + tRNA(Leu) + H(+). It carries out the reaction N-terminal L-aspartyl-[protein] + L-leucyl-tRNA(Leu) = N-terminal L-leucyl-L-aspartyl-[protein] + tRNA(Leu) + H(+). Its function is as follows. Functions in the N-end rule pathway of protein degradation where it conjugates Leu from its aminoacyl-tRNA to the N-termini of proteins containing an N-terminal aspartate or glutamate. The sequence is that of Aspartate/glutamate leucyltransferase from Brucella abortus (strain S19).